A 2311-amino-acid chain; its full sequence is Proto-oncogene tyrosine-protein kinase ROS (2311 aa).

The N-terminal stretch at 1-24 (MRNACLLLNRLGAFYFIWISAAYC) is a signal peptide. Residues 25–1873 (SFSKNCQDLC…LAKDTVTSPD (1849 aa)) lie on the Extracellular side of the membrane. N-linked (GlcNAc...) asparagine glycosylation is found at Asn49, Asn65, Asn77, Asn123, Asn132, Asn265, Asn287, Asn307, Asn333, Asn377, Asn405, Asn480, Asn607, Asn628, Asn706, Asn714, Asn911, Asn940, Asn962, Asn971, Asn1110, Asn1154, Asn1180, Asn1233, Asn1255, Asn1282, Asn1316, Asn1470, Asn1509, Asn1588, Asn1628, Asn1682, Asn1696, and Asn1730. Fibronectin type-III domains are found at residues 110-202 (KPGA…ASGV) and 203-294 (PTTA…PESK). The region spanning 571–671 (LPTLPRLVTV…EPFRGMTFEE (101 aa)) is the Fibronectin type-III 3 domain. Fibronectin type-III domains follow at residues 952-1047 (VPES…APEG) and 1051-1158 (APAN…SSDI). Fibronectin type-III domains are found at residues 1459 to 1569 (DTEK…TLYG), 1570 to 1669 (VPEG…AKTF), 1671 to 1766 (TPLS…TTAG), and 1767 to 1868 (VPSK…AKDT). The segment covering 1754–1764 (STSSPTSFKTT) has biased composition (low complexity). The tract at residues 1754–1786 (STSSPTSFKTTAGVPSKPGTPKRAEDSKNSVQW) is disordered. Residues 1775 to 1786 (KRAEDSKNSVQW) show a composition bias toward basic and acidic residues. Asn1792, Asn1795, and Asn1822 each carry an N-linked (GlcNAc...) asparagine glycan. The helical transmembrane segment at 1874–1898 (ITAIVAVIGAVVLGLTIIILFGFVW) threads the bilayer. The Cytoplasmic portion of the chain corresponds to 1899 to 2311 (HQRWKSRKPA…SISSAELTSV (413 aa)). The region spanning 1961–2240 (LNLHKLLGSG…KLQEIRHSPL (280 aa)) is the Protein kinase domain. ATP is bound by residues 1967-1975 (LGSGAFGEV) and Lys1996. Asp2095 acts as the Proton acceptor in catalysis. Tyr2131 carries the post-translational modification Phosphotyrosine; by autocatalysis.

The protein belongs to the protein kinase superfamily. Tyr protein kinase family. Insulin receptor subfamily. Interacts with VAV3; constitutive interaction mediating VAV3 phosphorylation. Highest expression in kidney. Also expressed in gonad, thymus, bursa, brain and kidney.

Its subcellular location is the cell membrane. The enzyme catalyses L-tyrosyl-[protein] + ATP = O-phospho-L-tyrosyl-[protein] + ADP + H(+). In terms of biological role, orphan receptor tyrosine kinase (RTK) that may activate several downstream signaling pathways related to cell differentiation, proliferation, growth and survival including the PI3 kinase-mTOR signaling pathway. Mediates the phosphorylation of PTPN11, an activator of this pathway. May also phosphorylate and activate the transcription factor STAT3 to control anchorage-independent cell growth. Mediates the phosphorylation and the activation of VAV3, a guanine nucleotide exchange factor regulating cell morphology. May activate other downstream signaling proteins including AKT1, MAPK1, MAPK3, IRS1, and PLCG2. This is Proto-oncogene tyrosine-protein kinase ROS (ROS1) from Gallus gallus (Chicken).